The following is a 204-amino-acid chain: CLAVATA3/ESR (CLE)-related protein 1 (204 aa).

A signal peptide spans 1–21 (MAKNAMLCLLILSVVLALAFA). The segment at 21-83 (ATNEKDDKEA…SNQLQNAYRM (63 aa)) is required for secretion from the host cytoplasm to the host apoplasm. N-linked (GlcNAc...) asparagine glycosylation is present at Asn-32. The interval 116–204 (RNTGMKPQSY…TPGVPDRQHR (89 aa)) is disordered. Basic and acidic residues-rich tracts occupy residues 139 to 151 (LHNREKILEEQKR), 160 to 172 (LHNREKTLEEQKR), and 181 to 193 (LHNREKTLEEQKR). 3 propeptides (removed in mature form) span residues 142-150 (REKILEEQK), 163-171 (REKTLEEQK), and 184-192 (REKTLEEQK).

It belongs to the CLV3/ESR signal peptide family. Post-translationally, preprocessing of the precursor by host proteases leads first to the production of 21-mer CLE-containing peptides (Arg-130 to Lys-150, Arg-151 to Lys-171 and Arg-172 to Lys-192) followed by an ultimate C-term trimming to give the mature 12-mer CLE1-1 peptide. In terms of tissue distribution, highly expressed exclusively within the dorsal esophageal gland cell during syncytium formation in host plants.

It is found in the secreted. It localises to the host cytoplasm. The protein localises to the host extracellular space. The protein resides in the extracellular space. Its subcellular location is the apoplast. Functionally, mimics host plant CLE extracellular signal peptides that regulate cell fate. May play a role in the differentiation or division of feeding cells (syncytia) induced in plant roots during infection. The protein is CLAVATA3/ESR (CLE)-related protein 1 of Globodera rostochiensis (Golden nematode worm).